The sequence spans 426 residues: MPPKKAPAAPQSGKKTEQKKKEKIIEDKTFGLKNKKGAKQQKFIKNVIHQVKFGQQNPRLVAQAEGEKKTKKDDKKKELLELNDLFKPVVAAQKVSKGADPKSVVCAFYKQGQCTKGDKCKFSHDLSLERKCEKRSVYVDGRDEELEKDTMENWDEKKLEEVVNKKHGEAEKIKPKTQIVCKFFLEAIENNKYGWFWVCPGGGDMCMYRHALPPGFVLKKDKKKEEKDEEISLEDLIERERAGLGLNVTRITLESFLEWKKRKRQDRIVKLEEEMEKRKADFKAGKSLGISGREVFEFRPELINDDDEEADDTDYIFDKEDSDSETADDIKDIDLSRFVLKDVDETGITVASCERFSSYVISTEKDEEKLCVASGGEMENEDQSEEQQENDLENGFVDAVPVDENLFTGEDMDELEEELYTLDLEK.

The disordered stretch occupies residues 1 to 28; sequence MPPKKAPAAPQSGKKTEQKKKEKIIEDK. Residues 14–28 show a composition bias toward basic and acidic residues; sequence KKTEQKKKEKIIEDK. 2 C3H1-type zinc fingers span residues 100–127 and 175–213; these read DPKS…HDLS and PKTQ…HALP. A coiled-coil region spans residues 219 to 283; that stretch reads KKDKKKEEKD…EMEKRKADFK (65 aa). Positions 237–261 are required for interaction with DRG1; sequence IERERAGLGLNVTRITLESFLEWKK. Residues 374-394 are disordered; the sequence is SGGEMENEDQSEEQQENDLEN. Residues 378–392 show a composition bias toward acidic residues; that stretch reads MENEDQSEEQQENDL.

It belongs to the ZC3H15/TMA46 family. Interacts with drg1.

The protein localises to the cytoplasm. Its subcellular location is the nucleus. In terms of biological role, protects drg1 from proteolytic degradation. This chain is Zinc finger CCCH domain-containing protein 15 (zc3h15), found in Xenopus tropicalis (Western clawed frog).